The chain runs to 141 residues: Large ribosomal subunit protein uL16 (141 aa).

The protein belongs to the universal ribosomal protein uL16 family. In terms of assembly, part of the 50S ribosomal subunit.

Binds 23S rRNA and is also seen to make contacts with the A and possibly P site tRNAs. The sequence is that of Large ribosomal subunit protein uL16 from Microchaete diplosiphon (Fremyella diplosiphon).